The sequence spans 553 residues: Membrane protein insertase YidC (553 aa).

A run of 5 helical transmembrane segments spans residues 7–24 (VLWV…DNWQ), 365–385 (WGWA…PLSA), 435–455 (LPVV…LASV), 474–494 (PFFI…SLNP), and 509–529 (PIAF…YYVV).

It belongs to the OXA1/ALB3/YidC family. Type 1 subfamily. Interacts with the Sec translocase complex via SecD. Specifically interacts with transmembrane segments of nascent integral membrane proteins during membrane integration.

It localises to the cell inner membrane. Its function is as follows. Required for the insertion and/or proper folding and/or complex formation of integral membrane proteins into the membrane. Involved in integration of membrane proteins that insert both dependently and independently of the Sec translocase complex, as well as at least some lipoproteins. Aids folding of multispanning membrane proteins. This Burkholderia orbicola (strain MC0-3) protein is Membrane protein insertase YidC.